The following is a 22-amino-acid chain: Melittin-like peptide (22 aa).

Gln22 carries the post-translational modification Glutamine amide.

In terms of tissue distribution, expressed by the skin dorsal glands.

It localises to the secreted. In Rana temporaria (European common frog), this protein is Melittin-like peptide.